Reading from the N-terminus, the 297-residue chain is Bifunctional protein FolD (297 aa).

NADP(+) is bound by residues 167-169 (GRS), S192, and I233.

The protein belongs to the tetrahydrofolate dehydrogenase/cyclohydrolase family. Homodimer.

It catalyses the reaction (6R)-5,10-methylene-5,6,7,8-tetrahydrofolate + NADP(+) = (6R)-5,10-methenyltetrahydrofolate + NADPH. It carries out the reaction (6R)-5,10-methenyltetrahydrofolate + H2O = (6R)-10-formyltetrahydrofolate + H(+). It functions in the pathway one-carbon metabolism; tetrahydrofolate interconversion. Its function is as follows. Catalyzes the oxidation of 5,10-methylenetetrahydrofolate to 5,10-methenyltetrahydrofolate and then the hydrolysis of 5,10-methenyltetrahydrofolate to 10-formyltetrahydrofolate. The sequence is that of Bifunctional protein FolD from Caulobacter vibrioides (strain ATCC 19089 / CIP 103742 / CB 15) (Caulobacter crescentus).